The sequence spans 185 residues: Large ribosomal subunit protein uL5 (185 aa).

Belongs to the universal ribosomal protein uL5 family. In terms of assembly, part of the 50S ribosomal subunit; part of the 5S rRNA/L5/L18/L25 subcomplex. Contacts the 5S rRNA and the P site tRNA. Forms a bridge to the 30S subunit in the 70S ribosome.

Its function is as follows. This is one of the proteins that bind and probably mediate the attachment of the 5S RNA into the large ribosomal subunit, where it forms part of the central protuberance. In the 70S ribosome it contacts protein S13 of the 30S subunit (bridge B1b), connecting the 2 subunits; this bridge is implicated in subunit movement. Contacts the P site tRNA; the 5S rRNA and some of its associated proteins might help stabilize positioning of ribosome-bound tRNAs. The chain is Large ribosomal subunit protein uL5 from Rhizobium johnstonii (strain DSM 114642 / LMG 32736 / 3841) (Rhizobium leguminosarum bv. viciae).